The following is a 156-amino-acid chain: Transcriptional regulator MraZ (156 aa).

2 consecutive SpoVT-AbrB domains span residues 5-51 and 80-123; these read TFEK…GKAL and MAKL…SREA.

This sequence belongs to the MraZ family. As to quaternary structure, forms oligomers.

It localises to the cytoplasm. It is found in the nucleoid. The sequence is that of Transcriptional regulator MraZ from Caulobacter vibrioides (strain ATCC 19089 / CIP 103742 / CB 15) (Caulobacter crescentus).